The primary structure comprises 646 residues: Lipoteichoic acid synthase (646 aa).

The Cytoplasmic portion of the chain corresponds to 1 to 7 (MSSQKKK). The helical transmembrane segment at 8–28 (ISLFAFFLLTVITITLKTYFS) threads the bilayer. At 29–43 (YYVDFSLGVKGLVQN) the chain is on the extracellular side. A helical transmembrane segment spans residues 44–64 (LILLMNPYSLVALVLSVFLFF). Residues 65-68 (KGKK) are Cytoplasmic-facing. The helical transmembrane segment at 69 to 89 (AFWFMFIGGFLLTFLLYANVV) threads the bilayer. Over 90–119 (YFRFFSDFLTFSTLNQVGNVESMGGAVSAS) the chain is Extracellular. Residues 120–140 (FKWYDFVYFIDTLVYLFILIF) form a helical membrane-spanning segment. Residues 141-153 (KTKWLDTKAFSKK) are Cytoplasmic-facing. Residues 154–174 (FVPVVMAASVALFFLNLAFAE) traverse the membrane as a helical segment. At 175–646 (TDRPELLTRT…ETGPKANSKK (472 aa)) the chain is on the extracellular side. 2 residues coordinate Mn(2+): E255 and T300. T300 is an active-site residue. A substrate-binding site is contributed by H416. Residues D475 and H476 each contribute to the Mn(2+) site. Residues 623-638 (NPDFKKVNPSKYKYET) are compositionally biased toward basic and acidic residues. Residues 623 to 646 (NPDFKKVNPSKYKYETGPKANSKK) are disordered.

It belongs to the LTA synthase family. Proteolytically cleaved.

The protein localises to the cell membrane. The protein resides in the secreted. It functions in the pathway cell wall biogenesis; lipoteichoic acid biosynthesis. In terms of biological role, catalyzes the polymerization of lipoteichoic acid (LTA) polyglycerol phosphate, a reaction that presumably uses phosphatidylglycerol (PG) as substrate. Is required for staphylococcal growth and cell division process. The protein is Lipoteichoic acid synthase (ltaS) of Staphylococcus aureus (strain USA300).